We begin with the raw amino-acid sequence, 620 residues long: Preterminal protein (620 aa).

The Nuclear localization signal signature appears at Arg-356–Arg-365. The residue at position 545 (Ser-545) is an O-(5'-phospho-DNA)-serine.

Belongs to the adenoviridae terminal protein family. In terms of assembly, heterodimer with the polymerase; this heterodimer binds to bp 9 to 18 of the genome. Interacts with host POU2F1; POU2F1 binds to the auxiliary sequences in the inverted terminal repeats and tethers the pTP-POL heterodimer to the origin DNA thereby participating in the assembly of the pre-initiation complex (POL-TP-DBP-NFIA-POU2F1). Preterminal protein is used to replicate viral genome, upon genomic encapsidation it is processed first into iTP and finally into TP by adenovirus protease.

Its subcellular location is the host nucleus matrix. Its function is as follows. Protein covalently bound to the viral DNA that acts as a primer for viral genomic replication by DNA strand displacement. Assembles on the viral origin of replication in an initiation complex with viral polymerase, DBP, host NFIA and host POU2F1/OCT1. During initiation, the polymerase covalently couples the first dCTP with Ser-580 of pTP. The terminal protein stimulates the template activity over 20 fold compared to protein-free templates. Neo-synthesized viral genomes are linked to two preterminal proteins, one for each 5' end. These new genomes are encapsidated in the nucleus, and during capsid maturation by viral protease, preterminal protein is first cleaved into intermediary (iTP), then into mature TP. May play a role in host nuclear matrix localization of genomic DNA. This Bovine adenovirus 2 (BAdV-2) protein is Preterminal protein.